We begin with the raw amino-acid sequence, 703 residues long: Calpain-8 (703 aa).

One can recognise a Calpain catalytic domain in the interval 45–344 (LFKDPEFPAC…FSRLEICNLS (300 aa)). Catalysis depends on residues cysteine 105, histidine 262, and asparagine 286. Residues 356–379 (WNLVLFNGHWTRGSTAGGCQNYPA) are domain III. EF-hand domains lie at 575 to 610 (FNIN…IQKY), 618 to 640 (DYNH…AGFT), and 670 to 703 (IRLE…CVLV). Residues aspartate 588, asparagine 590, threonine 592, threonine 594, glutamate 599, aspartate 618, asparagine 620, serine 622, threonine 624, and glutamate 629 each contribute to the Ca(2+) site.

It belongs to the peptidase C2 family. As to quaternary structure, monomer and homooligomer. Interacts with COPS1/GPS1, COPB1, EYA2, NME2, NME4 and TOMM70. Ca(2+) serves as cofactor. In terms of processing, undergoes autolytic cleavage between Ala-5 and Ala-6 which gives rise to fragments extending from Ala-6 to the C-terminus, Ala-6 to the EF-hand 2 domain and from Ala-6 to the beginning of domain III. As to expression, stomach.

The protein localises to the cytoplasm. It localises to the golgi apparatus. It catalyses the reaction Broad endopeptidase specificity.. Functionally, calcium-regulated non-lysosomal thiol-protease. Involved in membrane trafficking in the gastric surface mucus cells (pit cells) and may involve the membrane trafficking of mucus cells via interactions with coat protein. Proteolytically cleaves the beta-subunit of coatomer complex. The polypeptide is Calpain-8 (CAPN8) (Homo sapiens (Human)).